The following is a 129-amino-acid chain: Phosphoribosyl-AMP cyclohydrolase (129 aa).

Position 94 (aspartate 94) interacts with Mg(2+). Cysteine 95 lines the Zn(2+) pocket. The Mg(2+) site is built by aspartate 96 and aspartate 98. The Zn(2+) site is built by cysteine 111 and cysteine 118.

It belongs to the PRA-CH family. In terms of assembly, homodimer. Mg(2+) serves as cofactor. The cofactor is Zn(2+).

It is found in the cytoplasm. It catalyses the reaction 1-(5-phospho-beta-D-ribosyl)-5'-AMP + H2O = 1-(5-phospho-beta-D-ribosyl)-5-[(5-phospho-beta-D-ribosylamino)methylideneamino]imidazole-4-carboxamide. It functions in the pathway amino-acid biosynthesis; L-histidine biosynthesis; L-histidine from 5-phospho-alpha-D-ribose 1-diphosphate: step 3/9. In terms of biological role, catalyzes the hydrolysis of the adenine ring of phosphoribosyl-AMP. In Corynebacterium efficiens (strain DSM 44549 / YS-314 / AJ 12310 / JCM 11189 / NBRC 100395), this protein is Phosphoribosyl-AMP cyclohydrolase.